Reading from the N-terminus, the 117-residue chain is uncharacterized protein (117 aa).

Positions 1–38 (MIIDSSRIPSFTQLHSTMTRAPLLLLCVALVLLGHVNG) are cleaved as a signal peptide.

The protein localises to the secreted. This is an uncharacterized protein from Homo sapiens (Human).